A 921-amino-acid polypeptide reads, in one-letter code: Probable dipeptidyl-aminopeptidase B (921 aa).

The disordered stretch occupies residues 1 to 87 (MDAPATASRQ…EADTNDLETG (87 aa)). Over 1 to 108 (MDAPATASRQ…RVGVDRGLKK (108 aa)) the chain is Cytoplasmic. Residues 22 to 33 (SSLSTVSTTSLV) are compositionally biased toward low complexity. The span at 35–45 (DRLHEHNEKSY) shows a compositional bias: basic and acidic residues. Residues 66–75 (PDDDDDDDES) show a composition bias toward acidic residues. The chain crosses the membrane as a helical; Signal-anchor for type II membrane protein span at residues 109-129 (VILILAAAFLFAWGAALFVFL). Over 130–921 (SNKSYKHAST…KPIVEPKARV (792 aa)) the chain is Vacuolar. 3 N-linked (GlcNAc...) asparagine glycosylation sites follow: Asn-131, Asn-364, and Asn-577. Ser-768 functions as the Charge relay system in the catalytic mechanism. The N-linked (GlcNAc...) asparagine glycan is linked to Asn-827. Residues Asp-845 and His-878 each act as charge relay system in the active site.

The protein belongs to the peptidase S9B family.

The protein localises to the vacuole membrane. The enzyme catalyses Release of an N-terminal dipeptide, Xaa-Yaa-|-Zaa-, from a polypeptide, preferentially when Yaa is Pro, provided Zaa is neither Pro nor hydroxyproline.. Functionally, type IV dipeptidyl-peptidase which removes N-terminal dipeptides sequentially from polypeptides having unsubstituted N-termini provided that the penultimate residue is proline. The chain is Probable dipeptidyl-aminopeptidase B (DAPB) from Colletotrichum graminicola (strain M1.001 / M2 / FGSC 10212) (Maize anthracnose fungus).